We begin with the raw amino-acid sequence, 1136 residues long: Coiled-coil domain-containing protein 136 (1136 aa).

Positions 1–46 (MQAMDGEVLLPALYEEEEEEEEEEEEVEEEQVEKGGSLGSLSMGKH) are disordered. Positions 14 to 31 (YEEEEEEEEEEEEVEEEQ) are enriched in acidic residues. Phosphoserine is present on serine 50. Coiled-coil stretches lie at residues 293 to 631 (VMQL…QNQE) and 681 to 730 (LQAL…QTQS). Disordered regions lie at residues 741 to 773 (GKNS…KSYV), 814 to 837 (GSVS…DPAE), 965 to 990 (NRPS…NGVR), and 1040 to 1111 (KKER…PDPP). The span at 743-752 (NSGSRAPSTE) shows a compositional bias: polar residues. Residues 839–972 (EDLEHFEETV…KENRPSISSE (134 aa)) are a coiled coil. The span at 976-989 (KNVNKNMNKNANGV) shows a compositional bias: low complexity. Residues 1017–1057 (YYKASQRRLDELMKEEKEIEEARKKEREKKAKKDLCKLATN) are a coiled coil. Over residues 1040–1052 (KKEREKKAKKDLC) the composition is skewed to basic and acidic residues. The segment covering 1067–1091 (EPTEDEEENFEEYREGEDESCEAAE) has biased composition (acidic residues). A helical transmembrane segment spans residues 1112 to 1132 (IFSLPLVGLVVISALLWCWWA).

Present at high level in testis (at protein level).

The protein localises to the cytoplasmic vesicle. The protein resides in the secretory vesicle. Its subcellular location is the acrosome membrane. Its function is as follows. May play a role in acrosome formation in spermatogenesis and in fertilization. The sequence is that of Coiled-coil domain-containing protein 136 (Ccdc136) from Mus musculus (Mouse).